The sequence spans 540 residues: MAGGGPVASTTTNRASQYGYARGGLNWYIFIVALTAGSGGLLFGYDIGVTGGVTSMPEFLQKFFPSIYDRTQQPSDSKDPYCTYDDQKLQLFTSSFFLAGMFVSFFAGSVVRRWGRKPTMLIASVLFLAGAGLNAGAQDLAMLVIGRVLLGFGVGGGNNAVPLYLSECAPPKYRGGLNMMFQLAVTIGIIVAQLVNYGTQTMNNGWRLSLGLAGVPAIILLIGSLLLPETPNSLIERGHRRRGRAVLARLRRTEAVDTEFEDICAAAEESTRYTLRQSWAALFSRQYSPMLIVTSLIAMLQQLTGINAIMFYVPVLFSSFGTARHAALLNTVIIGAVNVAATFVSIFSVDKFGRRGLFLEGGIQMFIGQVVTAAVLGVELNKYGTNLPSSTAAGVLVVICVYVAAFAWSWGPLGWLVPSEIQTLETRGAGMSMAVIVNFLFSFVIGQAFLSMMCAMRWGVFLFFAGWVVIMTFFVYFCLPETKGVPVETVPTMFARHWLWGRVMGEKGRALVAADEARKAGTVAFKVESGSEDGKPASDQ.

At 1–29 the chain is on the cytoplasmic side; that stretch reads MAGGGPVASTTTNRASQYGYARGGLNWYI. A helical membrane pass occupies residues 30–50; that stretch reads FIVALTAGSGGLLFGYDIGVT. Residues 51–90 are Extracellular-facing; that stretch reads GGVTSMPEFLQKFFPSIYDRTQQPSDSKDPYCTYDDQKLQ. Residues 91 to 111 traverse the membrane as a helical segment; it reads LFTSSFFLAGMFVSFFAGSVV. The Cytoplasmic portion of the chain corresponds to 112-124; that stretch reads RRWGRKPTMLIAS. Residues 125-135 traverse the membrane as a helical segment; it reads VLFLAGAGLNA. Residues 136–147 are Extracellular-facing; sequence GAQDLAMLVIGR. A helical transmembrane segment spans residues 148–168; the sequence is VLLGFGVGGGNNAVPLYLSEC. The Cytoplasmic segment spans residues 169–176; sequence APPKYRGG. A helical transmembrane segment spans residues 177–197; it reads LNMMFQLAVTIGIIVAQLVNY. Over 198–207 the chain is Extracellular; that stretch reads GTQTMNNGWR. The chain crosses the membrane as a helical span at residues 208-228; the sequence is LSLGLAGVPAIILLIGSLLLP. Residues 229-296 are Cytoplasmic-facing; it reads ETPNSLIERG…YSPMLIVTSL (68 aa). A helical transmembrane segment spans residues 297 to 317; the sequence is IAMLQQLTGINAIMFYVPVLF. At 318-326 the chain is on the extracellular side; sequence SSFGTARHA. The chain crosses the membrane as a helical span at residues 327–337; that stretch reads ALLNTVIIGAV. The Cytoplasmic portion of the chain corresponds to 338–355; it reads NVAATFVSIFSVDKFGRR. Residues 356–376 form a helical membrane-spanning segment; that stretch reads GLFLEGGIQMFIGQVVTAAVL. Over 377-396 the chain is Extracellular; that stretch reads GVELNKYGTNLPSSTAAGVL. A helical membrane pass occupies residues 397 to 417; it reads VVICVYVAAFAWSWGPLGWLV. At 418–435 the chain is on the cytoplasmic side; the sequence is PSEIQTLETRGAGMSMAV. Residues 436–456 traverse the membrane as a helical segment; sequence IVNFLFSFVIGQAFLSMMCAM. Over 457–458 the chain is Extracellular; sequence RW. The helical transmembrane segment at 459 to 479 threads the bilayer; it reads GVFLFFAGWVVIMTFFVYFCL. At 480-540 the chain is on the cytoplasmic side; sequence PETKGVPVET…SEDGKPASDQ (61 aa).

It belongs to the major facilitator superfamily. Sugar transporter (TC 2.A.1.1) family.

It is found in the membrane. Active uptake of galactose. The protein is H(+)/hexose cotransporter 2 (HUP2) of Parachlorella kessleri (Green alga).